The primary structure comprises 381 residues: Probable 26S proteasome regulatory subunit rpn9 (381 aa).

One can recognise a PCI domain in the interval 177 to 343 (QYYRHCLLYL…QIVTISSVQS (167 aa)).

It belongs to the proteasome subunit S11 family.

Acts as a regulatory subunit of the 26S proteasome which is involved in the ATP-dependent degradation of ubiquitinated proteins. This Schizosaccharomyces pombe (strain 972 / ATCC 24843) (Fission yeast) protein is Probable 26S proteasome regulatory subunit rpn9 (rpn9).